Here is a 122-residue protein sequence, read N- to C-terminus: Large ribosomal subunit protein uL14 (122 aa).

It belongs to the universal ribosomal protein uL14 family. As to quaternary structure, part of the 50S ribosomal subunit. Forms a cluster with proteins L3 and L19. In the 70S ribosome, L14 and L19 interact and together make contacts with the 16S rRNA in bridges B5 and B8.

Binds to 23S rRNA. Forms part of two intersubunit bridges in the 70S ribosome. This Sinorhizobium fredii (strain NBRC 101917 / NGR234) protein is Large ribosomal subunit protein uL14.